The primary structure comprises 549 residues: Glucose-6-phosphate isomerase (549 aa).

The active-site Proton donor is the Glu-355. Catalysis depends on residues His-386 and Lys-514.

It belongs to the GPI family.

It localises to the cytoplasm. It carries out the reaction alpha-D-glucose 6-phosphate = beta-D-fructose 6-phosphate. It functions in the pathway carbohydrate biosynthesis; gluconeogenesis. Its pathway is carbohydrate degradation; glycolysis; D-glyceraldehyde 3-phosphate and glycerone phosphate from D-glucose: step 2/4. In terms of biological role, catalyzes the reversible isomerization of glucose-6-phosphate to fructose-6-phosphate. The protein is Glucose-6-phosphate isomerase of Salmonella typhi.